We begin with the raw amino-acid sequence, 273 residues long: Histidine racemase (273 aa).

The Proton acceptor role is filled by C72. The active-site Proton donor is the C211.

Belongs to the histidine racemase family. In terms of assembly, homodimer.

The protein localises to the cytoplasm. The enzyme catalyses L-histidine = D-histidine. Isomerase that catalyzes the conversion of L-histidine to D-histidine. Functions the biosynthesis of the metallophore staphylopine, which is involved in the acquisition of nickel, cobalt, zinc, copper, and iron, and thus enables bacterial growth inside the host, where metal access is limited. Therefore, this enzyme probably contributes to staphylococcal virulence. The reaction is reversible in vitro, the enzyme can produce D-histidine from the L-stereoisomer and vice versa. Appears to be specific for histidine as it cannot use other amino acids as substrate, including L-alanine and L-methionine. The chain is Histidine racemase from Staphylococcus aureus (strain Mu50 / ATCC 700699).